The following is a 766-amino-acid chain: Oligopeptide transporter 7 (766 aa).

Residues 1 to 58 are disordered; the sequence is MEESEQVLPLLTNPKDLTNPSYASSSSSSSEPRDETEDLLLPISDENEEEEEENSPIR. Residues 45–54 are compositionally biased toward acidic residues; that stretch reads DENEEEEEEN. A run of 15 helical transmembrane segments spans residues 79-99, 104-124, 154-174, 184-204, 247-267, 287-307, 324-344, 390-410, 446-466, 477-497, 509-529, 561-581, 627-647, 676-696, and 709-729; these read MWVL…FFWY, LTIS…LMAA, ITIF…VTVV, FFVS…WAGI, FVIA…LFQI, IGSG…STIS, VGVG…WLDV, LCTF…ATIM, VPEW…IFAC, WWGV…IGII, IITE…NMCF, FMAQ…TAWW, LYKS…LVWL, ATAV…FVVF, and VLSG…YMCL.

This sequence belongs to the oligopeptide OPT transporter (TC 2.A.67.1) family. As to expression, expressed in the major and the first-order veins and in the hydathodes of the leaves. In the roots, expressed in circular zones surrounding lateral root primordia and in some part of the root epidermis. Expressed also in the sepals and the cortical tissues of the stem, but not in the conducting bundles, the petals or the reproductive tissues.

It is found in the membrane. Involved in the translocation of tetra- and pentapeptides across the cellular membrane in an energy-dependent manner. May also transport cadmium complexes. In Arabidopsis thaliana (Mouse-ear cress), this protein is Oligopeptide transporter 7 (OPT7).